The chain runs to 341 residues: Phosphate acyltransferase (341 aa).

Belongs to the PlsX family. As to quaternary structure, homodimer. Probably interacts with PlsY.

Its subcellular location is the cytoplasm. The enzyme catalyses a fatty acyl-[ACP] + phosphate = an acyl phosphate + holo-[ACP]. The protein operates within lipid metabolism; phospholipid metabolism. Catalyzes the reversible formation of acyl-phosphate (acyl-PO(4)) from acyl-[acyl-carrier-protein] (acyl-ACP). This enzyme utilizes acyl-ACP as fatty acyl donor, but not acyl-CoA. This is Phosphate acyltransferase from Idiomarina loihiensis (strain ATCC BAA-735 / DSM 15497 / L2-TR).